Here is a 594-residue protein sequence, read N- to C-terminus: AT-rich interactive domain-containing protein 5A (594 aa).

The tract at residues 1 to 56 (MAAPVKGNRKQSTEGDALDPPASPKPAGKQNGIQNPISLEDSPEAGGEREEEQERE) is disordered. The interval 1–300 (MAAPVKGNRK…AVHLPESPQS (300 aa)) is interaction with SOX9. Residue Ser-23 is modified to Phosphoserine. Positions 55–147 (REEEQAFLVS…LVLPYVRHLK (93 aa)) constitute an ARID domain. Residues Lys-85 and Lys-94 each participate in a glycyl lysine isopeptide (Lys-Gly) (interchain with G-Cter in ubiquitin) cross-link. The interval 146–223 (LKGEDDKPLP…NSTEQQGLAS (78 aa)) is disordered. A compositionally biased stretch (basic and acidic residues) spans 165 to 189 (MAKENRGDDGATERPKKAKEERRMD). Phosphoserine is present on residues Ser-256 and Ser-289. Disordered regions lie at residues 281–331 (RHGA…EAQA) and 426–454 (AESPTLPPTFPSSPGLGSKRSLEEEGAAH). Residues 297–306 (SPQSPKGLTE) show a composition bias toward polar residues. A phosphoserine mark is found at Ser-438 and Ser-463.

As to quaternary structure, interacts with SOX9. Interacts with ESR1. Interacts with RORC. Post-translationally, phosphorylated by MAPK14 on serine residues involving a TLR4 signaling pathway upon lipopolysaccharide (LPS) stimulation leading to its ubiquitination and proteasomal degradation. In terms of processing, ubiquitinated leading to proteasomal degradation; involving WWP1 linked to MAPK14-mediated phosphorylation upon LPS stimulation.

It localises to the nucleus. DNA-binding protein that may regulate transcription and act as a repressor by binding to AT-rich stretches in the promoter region of target genes. May positively regulate chondrocyte-specific transcription such as of COL2A1 in collaboration with SOX9 and positively regulate histone H3 acetylation at chondrocyte-specific genes. May stimulate early-stage chondrocyte differentiation and inhibit later stage differention. Can repress ESR1-mediated transcriptional activation; proposed to act as corepressor for selective nuclear hormone receptors. As an RNA-binding protein, involved in the regulation of inflammatory response by stabilizing selective inflammation-related mRNAs, such as STAT3 and TBX21. Also stabilizes IL6 mRNA. Binds to stem loop structures located in the 3'UTRs of IL6, STAT3 and TBX21 mRNAs; at least for STAT3 prevents binding of ZC3H12A to the mRNA stem loop structure thus inhibiting its degradation activity. Contributes to elevated IL6 levels possibly implicated in autoimmunity processes. IL6-dependent stabilization of STAT3 mRNA may promote differentiation of naive CD4+ T-cells into T-helper Th17 cells. In CD4+ T-cells may also inhibit RORC-induced Th17 cell differentiation independently of IL6 signaling. Stabilization of TBX21 mRNA contributes to elevated interferon-gamma secretion in Th1 cells possibly implicated in the establishment of septic shock. Stabilizes TNFRSF4/OX40 mRNA by binding to the conserved stem loop structure in its 3'UTR; thereby competing with the mRNA-destabilizing functions of RC3H1 and endoribonuclease ZC3H12A. The protein is AT-rich interactive domain-containing protein 5A (ARID5A) of Homo sapiens (Human).